The primary structure comprises 59 residues: U-limacoditoxin(3)-Dv33 (59 aa).

The N-terminal stretch at 1–19 (MSKVILLCLIFALFACSIS) is a signal peptide.

This sequence belongs to the limacoditoxin-3 family. Post-translationally, the natural peptide is not amidated. The recombinant peptide is amidated. As to expression, expressed by the venom secretory cell of the spine. The spine is a cuticular structure containing a single large nucleated venom-secreting cell at its base. It is an independent unit capable of producing, storing and injecting venom. On the back of D.vulnerans caterpillars, spines are grouped together by 50 to 100 to form scoli, of which there are eight in D.vulnerans.

The protein resides in the secreted. Probable toxin. Shows a relatively potent antiparasitic activity against the major pathogenic nematode of ruminants (H.contortus, EC(50)=2.6 uM). Does not show insecticidal and antimicrobial activities. Does not induce increase in intracellular calcium in mouse DRG neurons, suggesting that it does not induce pain. The sequence is that of U-limacoditoxin(3)-Dv33 from Doratifera vulnerans (Mottled cup moth).